The following is a 119-amino-acid chain: Large ribosomal subunit protein uL22 (119 aa).

Belongs to the universal ribosomal protein uL22 family. In terms of assembly, part of the 50S ribosomal subunit.

In terms of biological role, this protein binds specifically to 23S rRNA; its binding is stimulated by other ribosomal proteins, e.g. L4, L17, and L20. It is important during the early stages of 50S assembly. It makes multiple contacts with different domains of the 23S rRNA in the assembled 50S subunit and ribosome. Functionally, the globular domain of the protein is located near the polypeptide exit tunnel on the outside of the subunit, while an extended beta-hairpin is found that lines the wall of the exit tunnel in the center of the 70S ribosome. The protein is Large ribosomal subunit protein uL22 of Rickettsia rickettsii (strain Iowa).